A 74-amino-acid polypeptide reads, in one-letter code: Homeobox protein Hox-B8 (74 aa).

Positions 1–24 (YTDCKLAASGLGEEAESSEQSPSP) are enriched in low complexity. The tract at residues 1–28 (YTDCKLAASGLGEEAESSEQSPSPTQLF) is disordered. The Antp-type hexapeptide signature appears at 27-32 (LFPWMR). The segment at residues 39–74 (RRRGRQTYSRYQTLELEKEFLFNPYLTRKRRIEVSR) is a DNA-binding region (homeobox).

The protein belongs to the Antp homeobox family.

The protein resides in the nucleus. Functionally, sequence-specific transcription factor which is part of a developmental regulatory system that provides cells with specific positional identities on the anterior-posterior axis. This is Homeobox protein Hox-B8 (HOXB8) from Gallus gallus (Chicken).